The chain runs to 316 residues: Transaldolase (316 aa).

Catalysis depends on K132, which acts as the Schiff-base intermediate with substrate.

It belongs to the transaldolase family. Type 1 subfamily. In terms of assembly, homodimer.

It is found in the cytoplasm. It carries out the reaction D-sedoheptulose 7-phosphate + D-glyceraldehyde 3-phosphate = D-erythrose 4-phosphate + beta-D-fructose 6-phosphate. It participates in carbohydrate degradation; pentose phosphate pathway; D-glyceraldehyde 3-phosphate and beta-D-fructose 6-phosphate from D-ribose 5-phosphate and D-xylulose 5-phosphate (non-oxidative stage): step 2/3. Functionally, transaldolase is important for the balance of metabolites in the pentose-phosphate pathway. In Aliivibrio fischeri (strain ATCC 700601 / ES114) (Vibrio fischeri), this protein is Transaldolase.